The following is a 597-amino-acid chain: HECT-type ubiquitin ligase-interacting protein creD (597 aa).

3 disordered regions span residues 375–398 (EVDP…GTLS), 439–492 (ASEH…MATP), and 576–597 (SRSH…RGRA). The span at 452-466 (GPPSGSNTHGSNTHA) shows a compositional bias: polar residues. Residues 472–483 (LSRRASDEDVHD) show a composition bias toward basic and acidic residues.

It belongs to the arrestin family. Interacts with hulA.

Component of the regulatory network controlling carbon source utilization through ubiquitination and deubiquitination involving creA, creB, creC, creD and acrB. May be involved in signaling by recognizing appropriately phosphorylated substrates via its arrestin domains and then recruit a HECT-type ubiquitin ligase such as hulA, leading to ubiquitination of the substrate, providing a link between ubiquitination and phosphorylation in protein regulation and stability. This is HECT-type ubiquitin ligase-interacting protein creD (creD) from Emericella nidulans (strain FGSC A4 / ATCC 38163 / CBS 112.46 / NRRL 194 / M139) (Aspergillus nidulans).